A 575-amino-acid chain; its full sequence is DNA-directed RNA polymerase subunit beta' (575 aa).

The Zn(2+) site is built by cysteine 64, cysteine 66, cysteine 85, and cysteine 88. Residues aspartate 440, aspartate 442, and aspartate 444 each coordinate Mg(2+).

The protein belongs to the RNA polymerase beta' chain family. RpoC1 subfamily. As to quaternary structure, in plastids the minimal PEP RNA polymerase catalytic core is composed of four subunits: alpha, beta, beta', and beta''. When a (nuclear-encoded) sigma factor is associated with the core the holoenzyme is formed, which can initiate transcription. The cofactor is Mg(2+). It depends on Zn(2+) as a cofactor.

The protein localises to the plastid. It carries out the reaction RNA(n) + a ribonucleoside 5'-triphosphate = RNA(n+1) + diphosphate. DNA-dependent RNA polymerase catalyzes the transcription of DNA into RNA using the four ribonucleoside triphosphates as substrates. The protein is DNA-directed RNA polymerase subunit beta' of Euglena longa (Euglenophycean alga).